The sequence spans 641 residues: Chaperone protein DnaK (641 aa).

Thr-200 bears the Phosphothreonine; by autocatalysis mark. Positions 605-623 (AAEQGGSADAASGNAQASK) are enriched in low complexity. The segment at 605 to 628 (AAEQGGSADAASGNAQASKAADDV) is disordered.

This sequence belongs to the heat shock protein 70 family.

Acts as a chaperone. The sequence is that of Chaperone protein DnaK from Xanthomonas oryzae pv. oryzae (strain KACC10331 / KXO85).